The primary structure comprises 486 residues: ATP synthase subunit beta (486 aa).

164–171 (GGAGVGKT) contacts ATP.

This sequence belongs to the ATPase alpha/beta chains family. In terms of assembly, F-type ATPases have 2 components, CF(1) - the catalytic core - and CF(0) - the membrane proton channel. CF(1) has five subunits: alpha(3), beta(3), gamma(1), delta(1), epsilon(1). CF(0) has four main subunits: a(1), b(1), b'(1) and c(9-12).

The protein localises to the cellular thylakoid membrane. The catalysed reaction is ATP + H2O + 4 H(+)(in) = ADP + phosphate + 5 H(+)(out). Produces ATP from ADP in the presence of a proton gradient across the membrane. The catalytic sites are hosted primarily by the beta subunits. The polypeptide is ATP synthase subunit beta (Prochlorococcus marinus subsp. pastoris (strain CCMP1986 / NIES-2087 / MED4)).